Reading from the N-terminus, the 383-residue chain is Protein delta homolog 2 (383 aa).

A signal peptide spans 1-26; sequence MPSGCRCLHLVCLLCILAAPVKPVRA. EGF-like domains follow at residues 27 to 58, 62 to 89, 91 to 129, and 131 to 172; these read DDCSSHCDLAHGCCAPDGSCRCDPGWEGLHCE, RMPGCQHGTCHQPWQCICHSGWAGKFCD, DEHVCTTQSPCRNGGQCIYDGGGEYHCVCPPGFHGRDCE, and KEGP…AHCE. Residues 27 to 306 are Extracellular-facing; that stretch reads DDCSSHCDLA…RQEAGLGKSS (280 aa). 17 cysteine pairs are disulfide-bonded: Cys-29–Cys-40, Cys-33–Cys-46, Cys-48–Cys-57, Cys-66–Cys-71, Cys-79–Cys-88, Cys-95–Cys-107, Cys-101–Cys-117, Cys-119–Cys-128, Cys-135–Cys-148, Cys-142–Cys-160, Cys-162–Cys-171, Cys-178–Cys-189, Cys-183–Cys-198, Cys-200–Cys-209, Cys-216–Cys-227, Cys-221–Cys-236, and Cys-238–Cys-247. Asn-157 is a glycosylation site (N-linked (GlcNAc...) asparagine). The EGF-like 5; calcium-binding domain maps to 174 to 210; sequence NVDDCLMRPCANGATCLDGINRFSCLCPEGFAGRFCT. The region spanning 212–248 is the EGF-like 6; calcium-binding domain; that stretch reads NLDDCASRPCQRGARCRDRVHDFDCLCPSGYGGKTCE. The helical transmembrane segment at 307 to 327 threads the bilayer; sequence LVAVVVFGAVTATLVLSTVLL. Topologically, residues 328–383 are cytoplasmic; that stretch reads TLRAWRRGVCPPGPCCYPAPHYAPARQDQECQVSMLPAGLPLPPDLPPEPGKTTAL.

It is found in the membrane. In terms of biological role, regulates adipogenesis. This Sus scrofa (Pig) protein is Protein delta homolog 2 (DLK2).